A 307-amino-acid chain; its full sequence is MLVYIGNGHYCYSNSTAMFLSSIGENVSPQLVEILTGVGLGAMIEYEKNLYFSMRDPDDGINYALNILGFTAEEHQQASDLDDPFPLLKQQIKQNPVILGPLDMGELTYHPNHKNLNGSDHYVLGYQMDNENIYVQDPAGFPFVPLSLDQFKKAWMAERIPYRKGINKYWSTAKKVVTLDNNEIYERAIDYFKRTYRKFEKVDIGLIGREAICFYADQLLNAPITADTIRHTTFFLFQLSARRANDYAMYFKDRHSHLSVLKTEQAKVFGICHSMSVNKDWKGISEKLMKLADLEDNFRLELLKVGY.

This is an uncharacterized protein from Bacillus subtilis (strain 168).